The primary structure comprises 303 residues: Proteasome subunit beta (303 aa).

Positions 1-64 (MTWPDRDTSA…VTPSDAVPHG (64 aa)) are cleaved as a propeptide — removed in mature form; by autocatalysis. Residue threonine 65 is the Nucleophile of the active site.

It belongs to the peptidase T1B family. In terms of assembly, the 20S proteasome core is composed of 14 alpha and 14 beta subunits that assemble into four stacked heptameric rings, resulting in a barrel-shaped structure. The two inner rings, each composed of seven catalytic beta subunits, are sandwiched by two outer rings, each composed of seven alpha subunits. The catalytic chamber with the active sites is on the inside of the barrel. Has a gated structure, the ends of the cylinder being occluded by the N-termini of the alpha-subunits. Is capped by the proteasome-associated ATPase, ARC.

The protein localises to the cytoplasm. It carries out the reaction Cleavage of peptide bonds with very broad specificity.. Its pathway is protein degradation; proteasomal Pup-dependent pathway. Its activity is regulated as follows. The formation of the proteasomal ATPase ARC-20S proteasome complex, likely via the docking of the C-termini of ARC into the intersubunit pockets in the alpha-rings, may trigger opening of the gate for substrate entry. Interconversion between the open-gate and close-gate conformations leads to a dynamic regulation of the 20S proteasome proteolysis activity. Functionally, component of the proteasome core, a large protease complex with broad specificity involved in protein degradation. The polypeptide is Proteasome subunit beta (Mycolicibacterium gilvum (strain PYR-GCK) (Mycobacterium gilvum (strain PYR-GCK))).